The following is a 294-amino-acid chain: Nucleoside-specific channel-forming protein Tsx (294 aa).

Residues 1 to 22 (MKKTLLAAGAVVALSTTFAAGA) form the signal peptide.

This sequence belongs to the nucleoside-specific channel-forming outer membrane porin (Tsx) (TC 1.B.10) family.

It localises to the cell outer membrane. Functions as a substrate-specific channel for nucleosides and deoxynucleosides. Also functions in albicidin uptake and as receptor for colicin K. Also is a receptor for several Tsx-specific bacteriophages. This is Nucleoside-specific channel-forming protein Tsx from Klebsiella pneumoniae.